The sequence spans 454 residues: Pup--protein ligase (454 aa).

A Mg(2+)-binding site is contributed by Glu-9. An ATP-binding site is contributed by Arg-53. Tyr-55 contributes to the Mg(2+) binding site. Catalysis depends on Asp-57, which acts as the Proton acceptor. Glu-63 serves as a coordination point for Mg(2+). ATP-binding residues include Thr-66 and Trp-420.

Belongs to the Pup ligase/Pup deamidase family. Pup-conjugating enzyme subfamily.

It catalyses the reaction ATP + [prokaryotic ubiquitin-like protein]-L-glutamate + [protein]-L-lysine = ADP + phosphate + N(6)-([prokaryotic ubiquitin-like protein]-gamma-L-glutamyl)-[protein]-L-lysine.. The protein operates within protein degradation; proteasomal Pup-dependent pathway. Its pathway is protein modification; protein pupylation. In terms of biological role, catalyzes the covalent attachment of the prokaryotic ubiquitin-like protein modifier Pup to the proteasomal substrate proteins, thereby targeting them for proteasomal degradation. This tagging system is termed pupylation. The ligation reaction involves the side-chain carboxylate of the C-terminal glutamate of Pup and the side-chain amino group of a substrate lysine. The polypeptide is Pup--protein ligase (Arthrobacter sp. (strain FB24)).